The chain runs to 106 residues: UPF0145 protein Daci_3728 (106 aa).

This sequence belongs to the UPF0145 family.

The protein is UPF0145 protein Daci_3728 of Delftia acidovorans (strain DSM 14801 / SPH-1).